Consider the following 238-residue polypeptide: Fatty acid metabolism regulator protein (238 aa).

The region spanning 6–74 (QSPAGFAEEY…HGKPTKVNNF (69 aa)) is the HTH gntR-type domain. A DNA-binding region (H-T-H motif) is located at residues 34 to 53 (ERELSELIGVTRTTLREVLQ).

In terms of assembly, homodimer.

Its subcellular location is the cytoplasm. In terms of biological role, multifunctional regulator of fatty acid metabolism. In Erwinia tasmaniensis (strain DSM 17950 / CFBP 7177 / CIP 109463 / NCPPB 4357 / Et1/99), this protein is Fatty acid metabolism regulator protein.